The following is a 59-amino-acid chain: Cuticle protein 7 isoform b (59 aa).

Glutamine 1 is modified (pyrrolidone carboxylic acid).

The polypeptide is Cuticle protein 7 isoform b (Limulus polyphemus (Atlantic horseshoe crab)).